The sequence spans 101 residues: Small ubiquitin-related modifier 1 (101 aa).

Residue Ser2 is modified to N-acetylserine. Residue Ser2 is modified to Phosphoserine. Residue Lys7 forms a Glycyl lysine isopeptide (Lys-Gly) (interchain with G-Cter in SUMO1); alternate linkage. Lys7 is covalently cross-linked (Glycyl lysine isopeptide (Lys-Gly) (interchain with G-Cter in SUMO2); alternate). A Phosphoserine modification is found at Ser9. Residues Lys16, Lys17, and Lys23 each participate in a glycyl lysine isopeptide (Lys-Gly) (interchain with G-Cter in SUMO2) cross-link. Residues 20–97 form the Ubiquitin-like domain; sequence EYIKLKVIGQ…IEVYQEQTGG (78 aa). Lys25 participates in a covalent cross-link: Glycyl lysine isopeptide (Lys-Gly) (interchain with G-Cter in SUMO1). Ser32 is modified (phosphoserine). Glycyl lysine isopeptide (Lys-Gly) (interchain with G-Cter in SUMO2) cross-links involve residues Lys37, Lys39, Lys45, and Lys46. Gly97 participates in a covalent cross-link: Glycyl lysine isopeptide (Gly-Lys) (interchain with K-? in acceptor proteins). Positions 98–101 are excised as a propeptide; it reads HSNV.

The protein belongs to the ubiquitin family. SUMO subfamily. As to quaternary structure, covalently attached to KCNB1; UBE2I increases cross-linking with KCNB1 and PIAS1 decreases cross-links with KCNB1. Interacts with SAE2, RANBP2, PIAS1 and PIAS2. Interacts with PRKN. Covalently attached to a number of proteins such as IKFZ1, PML, RANGAP1, HIPK2, SP100, p53, p73-alpha, MDM2, JUN, DNMT3B and TDG. Also interacts with HIF1A, HIPK2, HIPK3, CHD3, EXOSC9, RAD51 and RAD52. Interacts with USP25 (via ts SIM domain); the interaction weakly sumoylates USP25. Interacts with SIMC1, CASP8AP2, RNF111 and SOBP (via SIM domains). Interacts with BHLHE40/DEC1. Interacts with RWDD3. Interacts with UBE2I/UBC9 and this interaction is enhanced in the presence of RWDD3. Interacts with MTA1. Interacts with SENP2. Interacts with HINT1. In terms of processing, cleavage of precursor form by SENP1 or SENP2 is necessary for function. Post-translationally, polymeric SUMO1 chains undergo polyubiquitination by RNF4.

It localises to the nucleus membrane. It is found in the nucleus speckle. The protein resides in the cytoplasm. The protein localises to the nucleus. Its subcellular location is the PML body. It localises to the cell membrane. Its function is as follows. Ubiquitin-like protein that can be covalently attached to proteins as a monomer or a lysine-linked polymer. Covalent attachment via an isopeptide bond to its substrates requires prior activation by the E1 complex SAE1-SAE2 and linkage to the E2 enzyme UBE2I, and can be promoted by E3 ligases such as PIAS1-4, RANBP2 or CBX4. This post-translational modification on lysine residues of proteins plays a crucial role in a number of cellular processes such as nuclear transport, DNA replication and repair, mitosis and signal transduction. Involved for instance in targeting RANGAP1 to the nuclear pore complex protein RANBP2. Covalently attached to the voltage-gated potassium channel KCNB1; this modulates the gating characteristics of KCNB1. Polymeric SUMO1 chains are also susceptible to polyubiquitination which functions as a signal for proteasomal degradation of modified proteins. May be involved in modified proteins. May also regulate a network of genes involved in palate development. Covalently attached to ZFHX3. In Ictidomys tridecemlineatus (Thirteen-lined ground squirrel), this protein is Small ubiquitin-related modifier 1 (SUMO1).